Here is a 213-residue protein sequence, read N- to C-terminus: EEF1A lysine methyltransferase 1 (213 aa).

The protein belongs to the class I-like SAM-binding methyltransferase superfamily. EFM5 family.

The protein localises to the cytoplasm. The catalysed reaction is L-lysyl-[protein] + 3 S-adenosyl-L-methionine = N(6),N(6),N(6)-trimethyl-L-lysyl-[protein] + 3 S-adenosyl-L-homocysteine + 3 H(+). Protein-lysine methyltransferase that selectively catalyzes the trimethylation of EEF1A at 'Lys-79'. The polypeptide is EEF1A lysine methyltransferase 1 (Gallus gallus (Chicken)).